The primary structure comprises 229 residues: Cilia- and flagella-associated protein 95 (229 aa).

At 1 to 123 (MDSLDRSCQD…LLNEETVSSG (123 aa)) the chain is on the extracellular side. Asparagine 75 is a glycosylation site (N-linked (GlcNAc...) asparagine). A helical transmembrane segment spans residues 124–140 (IIERVTGLPATGFGAVF). The Cytoplasmic segment spans residues 141–229 (PRHPPDWSKM…PLTSGPIVPI (89 aa)). Positions 153-163 (LTTYSEDYVPP) are mn.

In terms of assembly, microtubule inner protein component of sperm flagellar doublet microtubules. Interacts with MYH9. Interacts with MYH10. As to expression, expressed in undifferentiated embryonic stem cells. Expressed in airway epithelial cells.

Its subcellular location is the cytoplasm. The protein localises to the cytoskeleton. It localises to the cilium axoneme. The protein resides in the flagellum axoneme. It is found in the cell membrane. In terms of biological role, microtubule inner protein (MIP) part of the dynein-decorated doublet microtubules (DMTs) in cilia axoneme, which is required for motile cilia beating. This chain is Cilia- and flagella-associated protein 95, found in Homo sapiens (Human).